Reading from the N-terminus, the 85-residue chain is ELKHQLLRKYGGYLGGLRQEFSKRKKKGKLPKEARQKLLHWWELHYKWPYPSETEKMALAETTGLDPKQINNWFINQRKRHWKPA.

In terms of domain architecture, ELK spans 1–21 (ELKHQLLRKYGGYLGGLRQEF). A DNA-binding region (homeobox; TALE-type) is located at residues 22–85 (SKRKKKGKLP…NQRKRHWKPA (64 aa)).

Belongs to the TALE/KNOX homeobox family. As to expression, strongly expressed in ear inflorescence primordia and shoot meristem. Weakly expressed in embryos. Absent from leaves.

Its subcellular location is the nucleus. Functionally, probably binds to the DNA sequence 5'-TGAC-3'. This Zea mays (Maize) protein is Homeobox protein knotted-1-like 8 (KNOX8).